Reading from the N-terminus, the 880-residue chain is Translation initiation factor IF-2 (880 aa).

The segment covering glutamate 143–isoleucine 228 has biased composition (basic and acidic residues). Positions glutamate 143–asparagine 289 are disordered. The segment covering glycine 249–glycine 262 has biased composition (basic residues). Positions serine 380–lysine 549 constitute a tr-type G domain. The interval glycine 389 to threonine 396 is G1. Glycine 389–threonine 396 contributes to the GTP binding site. The G2 stretch occupies residues glycine 414–histidine 418. Positions aspartate 435 to glycine 438 are G3. GTP is bound by residues aspartate 435–histidine 439 and asparagine 489–aspartate 492. The tract at residues asparagine 489 to aspartate 492 is G4. Residues serine 525 to lysine 527 are G5.

This sequence belongs to the TRAFAC class translation factor GTPase superfamily. Classic translation factor GTPase family. IF-2 subfamily.

The protein localises to the cytoplasm. In terms of biological role, one of the essential components for the initiation of protein synthesis. Protects formylmethionyl-tRNA from spontaneous hydrolysis and promotes its binding to the 30S ribosomal subunits. Also involved in the hydrolysis of GTP during the formation of the 70S ribosomal complex. In Shewanella putrefaciens (strain CN-32 / ATCC BAA-453), this protein is Translation initiation factor IF-2.